The chain runs to 401 residues: Formate-dependent phosphoribosylglycinamide formyltransferase (401 aa).

N(1)-(5-phospho-beta-D-ribosyl)glycinamide-binding positions include 22 to 23 (EL) and E82. ATP contacts are provided by residues R115, K157, 162–167 (SSGKGQ), 197–200 (EGFI), and E205. The region spanning 120 to 315 (RLAAESLGLP…EFELHARAIL (196 aa)) is the ATP-grasp domain. Positions 274 and 286 each coordinate Mg(2+). N(1)-(5-phospho-beta-D-ribosyl)glycinamide is bound by residues D293, K362, and 369–370 (RR).

It belongs to the PurK/PurT family. Homodimer.

The catalysed reaction is N(1)-(5-phospho-beta-D-ribosyl)glycinamide + formate + ATP = N(2)-formyl-N(1)-(5-phospho-beta-D-ribosyl)glycinamide + ADP + phosphate + H(+). It functions in the pathway purine metabolism; IMP biosynthesis via de novo pathway; N(2)-formyl-N(1)-(5-phospho-D-ribosyl)glycinamide from N(1)-(5-phospho-D-ribosyl)glycinamide (formate route): step 1/1. In terms of biological role, involved in the de novo purine biosynthesis. Catalyzes the transfer of formate to 5-phospho-ribosyl-glycinamide (GAR), producing 5-phospho-ribosyl-N-formylglycinamide (FGAR). Formate is provided by PurU via hydrolysis of 10-formyl-tetrahydrofolate. The polypeptide is Formate-dependent phosphoribosylglycinamide formyltransferase (Cupriavidus necator (strain ATCC 17699 / DSM 428 / KCTC 22496 / NCIMB 10442 / H16 / Stanier 337) (Ralstonia eutropha)).